The sequence spans 235 residues: 2-C-methyl-D-erythritol 4-phosphate cytidylyltransferase (235 aa).

Belongs to the IspD/TarI cytidylyltransferase family. IspD subfamily.

The enzyme catalyses 2-C-methyl-D-erythritol 4-phosphate + CTP + H(+) = 4-CDP-2-C-methyl-D-erythritol + diphosphate. It participates in isoprenoid biosynthesis; isopentenyl diphosphate biosynthesis via DXP pathway; isopentenyl diphosphate from 1-deoxy-D-xylulose 5-phosphate: step 2/6. Catalyzes the formation of 4-diphosphocytidyl-2-C-methyl-D-erythritol from CTP and 2-C-methyl-D-erythritol 4-phosphate (MEP). In Pseudomonas fluorescens (strain Pf0-1), this protein is 2-C-methyl-D-erythritol 4-phosphate cytidylyltransferase.